A 186-amino-acid polypeptide reads, in one-letter code: MGIKEKEIELETLKREIAQAEASLEQDFIKHMVDKTNEKVEDLFFSDKPEFYKFVFTEQNNYLREKLTDKVSKAMDLSDEIQRDKDAEEIEKDKQAFLNKHPEVDFNELLEFYEEELPKRIKTQIDKLEGAAFFEAILDYFNAINAREEEPKKESKEEYSSLPKEALGNGVSGVGYANNENIMTRY.

2 coiled-coil regions span residues 2–30 and 63–85; these read GIKEKEIELETLKREIAQAEASLEQDFIK and LREKLTDKVSKAMDLSDEIQRDK.

This is Coiled-coil domain-containing protein ORF13 from Helicobacter pylori (strain 35A).